We begin with the raw amino-acid sequence, 522 residues long: DEAD-box ATP-dependent RNA helicase 1 (522 aa).

The Q motif signature appears at 30–59 (CALDTLPCLNPKLKKALENMGISSLFPVQV). Residues 66 to 297 (IGPGGFERDI…QLDLHHPLFM (232 aa)) form the Helicase ATP-binding domain. 79–86 (SPTGSGKT) provides a ligand contact to ATP. The short motif at 207–210 (DETD) is the DEAD box element. Residues 325 to 475 (YLVALLKSWE…PIPPTSLDSI (151 aa)) form the Helicase C-terminal domain. Residues 490–522 (VESEAPKKGRQAFRHNSRTGNSQTKLNKPRSEA) are disordered. Positions 497-506 (KGRQAFRHNS) are enriched in basic residues.

Belongs to the DEAD box helicase family. DDX51/DBP6 subfamily.

The enzyme catalyses ATP + H2O = ADP + phosphate + H(+). The chain is DEAD-box ATP-dependent RNA helicase 1 (RH1) from Arabidopsis thaliana (Mouse-ear cress).